Reading from the N-terminus, the 315-residue chain is Ribosomal protein L11 methyltransferase (315 aa).

4 residues coordinate S-adenosyl-L-methionine: T161, G182, D204, and N248.

The protein belongs to the methyltransferase superfamily. PrmA family.

It is found in the cytoplasm. The catalysed reaction is L-lysyl-[protein] + 3 S-adenosyl-L-methionine = N(6),N(6),N(6)-trimethyl-L-lysyl-[protein] + 3 S-adenosyl-L-homocysteine + 3 H(+). Methylates ribosomal protein L11. The sequence is that of Ribosomal protein L11 methyltransferase from Shouchella clausii (strain KSM-K16) (Alkalihalobacillus clausii).